The primary structure comprises 122 residues: Small ribosomal subunit protein bS6 (122 aa).

The protein belongs to the bacterial ribosomal protein bS6 family.

Binds together with bS18 to 16S ribosomal RNA. This is Small ribosomal subunit protein bS6 from Neisseria gonorrhoeae (strain ATCC 700825 / FA 1090).